Reading from the N-terminus, the 80-residue chain is ATP synthase F(1) complex subunit delta, mitochondrial (80 aa).

Residues 1 to 22 constitute a mitochondrion transit peptide; it reads MLPATLLRXSGLGRVVRQARAY.

The protein belongs to the ATPase epsilon chain family. Component of the ATP synthase complex composed at least of ATP5F1A/subunit alpha, ATP5F1B/subunit beta, ATP5MC1/subunit c (homooctomer), MT-ATP6/subunit a, MT-ATP8/subunit 8, ATP5ME/subunit e, ATP5MF/subunit f, ATP5MG/subunit g, ATP5MK/subunit k, ATP5MJ/subunit j, ATP5F1C/subunit gamma, ATP5F1D/subunit delta, ATP5F1E/subunit epsilon, ATP5PF/subunit F6, ATP5PB/subunit b, ATP5PD/subunit d, ATP5PO/subunit OSCP. ATP synthase complex consists of a soluble F(1) head domain (subunits alpha(3) and beta(3)) - the catalytic core - and a membrane F(0) domain - the membrane proton channel (subunits c, a, 8, e, f, g, k and j). These two domains are linked by a central stalk (subunits gamma, delta, and epsilon) rotating inside the F1 region and a stationary peripheral stalk (subunits F6, b, d, and OSCP). Component of a complex composed at least by ATPIF1, ATP5F1A, ATP5F1B, ATP5F1C AND ATP5F1E.

The protein resides in the mitochondrion. It is found in the mitochondrion inner membrane. In terms of biological role, subunit delta, of the mitochondrial membrane ATP synthase complex (F(1)F(0) ATP synthase or Complex V) that produces ATP from ADP in the presence of a proton gradient across the membrane which is generated by electron transport complexes of the respiratory chain. ATP synthase complex consist of a soluble F(1) head domain - the catalytic core - and a membrane F(1) domain - the membrane proton channel. These two domains are linked by a central stalk rotating inside the F(1) region and a stationary peripheral stalk. During catalysis, ATP synthesis in the catalytic domain of F(1) is coupled via a rotary mechanism of the central stalk subunits to proton translocation. In vivo, can only synthesize ATP although its ATP hydrolase activity can be activated artificially in vitro. With the central stalk subunit gamma, is essential for the biogenesis of F(1) catalytic part of the ATP synthase complex namely in the formation of F1 assembly intermediate. In Sus scrofa (Pig), this protein is ATP synthase F(1) complex subunit delta, mitochondrial.